Consider the following 327-residue polypeptide: GMP reductase (327 aa).

The Thioimidate intermediate role is filled by Cys-176. Residue 205-228 (IIADGGIRTHGDIAKSIRFGASMV) participates in NADP(+) binding.

It belongs to the IMPDH/GMPR family. GuaC type 2 subfamily.

The catalysed reaction is IMP + NH4(+) + NADP(+) = GMP + NADPH + 2 H(+). Functionally, catalyzes the irreversible NADPH-dependent deamination of GMP to IMP. It functions in the conversion of nucleobase, nucleoside and nucleotide derivatives of G to A nucleotides, and in maintaining the intracellular balance of A and G nucleotides. The protein is GMP reductase of Streptococcus pyogenes serotype M3 (strain ATCC BAA-595 / MGAS315).